Consider the following 498-residue polypeptide: Probable deoxyguanosinetriphosphate triphosphohydrolase (498 aa).

Positions 71 to 262 constitute an HD domain; sequence RLTHSLEVQQ…MEAADDISYC (192 aa).

The protein belongs to the dGTPase family. Type 1 subfamily. The cofactor is Mg(2+).

It carries out the reaction dGTP + H2O = 2'-deoxyguanosine + triphosphate + H(+). Functionally, dGTPase preferentially hydrolyzes dGTP over the other canonical NTPs. This Pseudomonas aeruginosa (strain ATCC 15692 / DSM 22644 / CIP 104116 / JCM 14847 / LMG 12228 / 1C / PRS 101 / PAO1) protein is Probable deoxyguanosinetriphosphate triphosphohydrolase.